Here is a 201-residue protein sequence, read N- to C-terminus: FMN reductase (NADH) RutF 1 (201 aa).

Residues 167–195 (PRAPRSGSAPAEPARAARAVGARPAEGPA) are compositionally biased toward low complexity. The tract at residues 167-201 (PRAPRSGSAPAEPARAARAVGARPAEGPALALRSA) is disordered.

The protein belongs to the non-flavoprotein flavin reductase family. RutF subfamily.

The catalysed reaction is FMNH2 + NAD(+) = FMN + NADH + 2 H(+). Catalyzes the reduction of FMN to FMNH2 which is used to reduce pyrimidine by RutA via the Rut pathway. This chain is FMN reductase (NADH) RutF 1, found in Methylorubrum extorquens (strain CM4 / NCIMB 13688) (Methylobacterium extorquens).